The sequence spans 151 residues: Protein archease-like (151 aa).

The Ca(2+) site is built by Asp20, Asp150, and Ile151.

It belongs to the archease family.

Functionally, component of the tRNA-splicing ligase complex required to facilitate the enzymatic turnover of catalytic subunit RtcB. In Dictyostelium discoideum (Social amoeba), this protein is Protein archease-like.